Reading from the N-terminus, the 1390-residue chain is Nuclear pore complex protein Nup155 (1390 aa).

O-linked (GlcNAc) serine glycosylation occurs at serine 525. The disordered stretch occupies residues 598-632; that stretch reads GSPMYSSSPVPTGSPYPNPSSLGTPSHGAQPPTMS. Lysine 739 is covalently cross-linked (Glycyl lysine isopeptide (Lys-Gly) (interchain with G-Cter in SUMO2)). Residues 984 to 1011 are disordered; sequence QSKAAPQSPSVPKKPGPPVLSSDPNMLS. The residue at position 1056 (serine 1056) is a Phosphoserine.

It belongs to the non-repetitive/WGA-negative nucleoporin family. As to quaternary structure, interacts with GLE1. Able to form a heterotrimer with GLE1 and NUP42 in vitro. Forms a complex with NUP35, NUP93, NUP205 and lamin B. In terms of processing, phosphorylated. Phosphorylation and dephosphorylation may be important for the function of NUP155 and may play a role in the reversible disassembly of the nuclear pore complex during mitosis. Disulfide-linked to NUP62. The inner channel of the NPC has a different redox environment from the cytoplasm and allows the formation of interchain disulfide bonds between some nucleoporins, the significant increase of these linkages upon oxidative stress reduces the permeability of the NPC.

It is found in the nucleus. The protein localises to the nuclear pore complex. Its subcellular location is the nucleus membrane. In terms of biological role, essential component of nuclear pore complex. Could be essessential for embryogenesis. Nucleoporins may be involved both in binding and translocating proteins during nucleocytoplasmic transport. In Rattus norvegicus (Rat), this protein is Nuclear pore complex protein Nup155 (Nup155).